The chain runs to 271 residues: Glutamate racemase (271 aa).

Residues 10–11 and 42–43 contribute to the substrate site; these read DS and YG. Catalysis depends on C73, which acts as the Proton donor/acceptor. 74–75 lines the substrate pocket; sequence NS. C183 (proton donor/acceptor) is an active-site residue. Position 184-185 (184-185) interacts with substrate; sequence TH.

The protein belongs to the aspartate/glutamate racemases family.

It catalyses the reaction L-glutamate = D-glutamate. The protein operates within cell wall biogenesis; peptidoglycan biosynthesis. Its function is as follows. Provides the (R)-glutamate required for cell wall biosynthesis. The protein is Glutamate racemase of Saccharopolyspora erythraea (strain ATCC 11635 / DSM 40517 / JCM 4748 / NBRC 13426 / NCIMB 8594 / NRRL 2338).